The chain runs to 453 residues: MSNDLPTKKDLVKWDQEDALNWTRGEYEIPNSKACGGEADGKAIYFCGNSLGLLNKKARQHIMEELDVWSTSSVTGHFNHPYQRPWKHVDEPLTPHLAKLVGAREEEVAHTSTLTSNMHNLFTSFYQPTEKRWKIVIEKGSFPSDWYAVHSHPRLHDKVLRPEQIDNAIIALVPREGEDTLRTEDILKVLDDNKDSIAIVWLPLVQYYTGQLFDISSISPKVHEIGALLGLDMAHGIGNVECKLNEWNVDFAVWCTYKYLNAGPAAIGGFYIRSGLEDGGRRLAGWWGNDARTRFHMSPNFQPTPGAKGYQHSCTPVFSSIPLLATLQLIEAVGFSNMVEKARRLTGTLEALLKASRYHVHPADPKGKIGFKIITPAAPYRGTQLSLVILPEEEHVMPKVFDRMLRKGLVGDERKPSVIRLSPVVLYNTFEEVGRAVEIVEEALEEEEEERKR.

Residues L114, T115, 142-145 (FPSD), D232, H235, and Y257 contribute to the pyridoxal 5'-phosphate site. The residue at position 258 (K258) is an N6-(pyridoxal phosphate)lysine. W286 is a pyridoxal 5'-phosphate binding site.

This sequence belongs to the kynureninase family. In terms of assembly, homodimer. Pyridoxal 5'-phosphate serves as cofactor.

Its subcellular location is the cytoplasm. It carries out the reaction L-kynurenine + H2O = anthranilate + L-alanine + H(+). The enzyme catalyses 3-hydroxy-L-kynurenine + H2O = 3-hydroxyanthranilate + L-alanine + H(+). The protein operates within amino-acid degradation; L-kynurenine degradation; L-alanine and anthranilate from L-kynurenine: step 1/1. It participates in cofactor biosynthesis; NAD(+) biosynthesis; quinolinate from L-kynurenine: step 2/3. Its function is as follows. Catalyzes the cleavage of L-kynurenine (L-Kyn) and L-3-hydroxykynurenine (L-3OHKyn) into anthranilic acid (AA) and 3-hydroxyanthranilic acid (3-OHAA), respectively. The polypeptide is Kynureninase (Cryptococcus neoformans var. neoformans serotype D (strain JEC21 / ATCC MYA-565) (Filobasidiella neoformans)).